Consider the following 560-residue polypeptide: NADH-quinone oxidoreductase subunit C/D (560 aa).

An NADH dehydrogenase I subunit C region spans residues 2 to 157; it reads NKLENLKQLL…NNQQACTNSL (156 aa). An NADH dehydrogenase I subunit D region spans residues 175–560; that stretch reads KYLPLNIGPS…MNLIAGELDR (386 aa).

This sequence in the N-terminal section; belongs to the complex I 30 kDa subunit family. It in the C-terminal section; belongs to the complex I 49 kDa subunit family. NDH-1 is composed of 13 different subunits. Subunits NuoB, CD, E, F, and G constitute the peripheral sector of the complex.

Its subcellular location is the cytoplasm. The protein resides in the cell inner membrane. It catalyses the reaction a quinone + NADH + 5 H(+)(in) = a quinol + NAD(+) + 4 H(+)(out). NDH-1 shuttles electrons from NADH, via FMN and iron-sulfur (Fe-S) centers, to quinones in the respiratory chain. The immediate electron acceptor for the enzyme in this species is believed to be ubiquinone. Couples the redox reaction to proton translocation (for every two electrons transferred, four hydrogen ions are translocated across the cytoplasmic membrane), and thus conserves the redox energy in a proton gradient. The sequence is that of NADH-quinone oxidoreductase subunit C/D from Bdellovibrio bacteriovorus (strain ATCC 15356 / DSM 50701 / NCIMB 9529 / HD100).